The chain runs to 185 residues: NADH-quinone oxidoreductase subunit B (185 aa).

4 residues coordinate [4Fe-4S] cluster: cysteine 37, cysteine 38, cysteine 103, and cysteine 132.

The protein belongs to the complex I 20 kDa subunit family. NDH-1 is composed of 14 different subunits. Subunits NuoB, C, D, E, F, and G constitute the peripheral sector of the complex. [4Fe-4S] cluster serves as cofactor.

The protein resides in the cell membrane. It carries out the reaction a quinone + NADH + 5 H(+)(in) = a quinol + NAD(+) + 4 H(+)(out). Its function is as follows. NDH-1 shuttles electrons from NADH, via FMN and iron-sulfur (Fe-S) centers, to quinones in the respiratory chain. The immediate electron acceptor for the enzyme in this species is believed to be a menaquinone. Couples the redox reaction to proton translocation (for every two electrons transferred, four hydrogen ions are translocated across the cytoplasmic membrane), and thus conserves the redox energy in a proton gradient. In Thermobifida fusca (strain YX), this protein is NADH-quinone oxidoreductase subunit B.